The following is a 1248-amino-acid chain: von Willebrand factor A domain-containing protein 5B2 (1248 aa).

The VIT domain maps to 1–138; the sequence is MPGLYCPTSW…TMTVTLCSSR (138 aa). The disordered stretch occupies residues 184-204; that stretch reads VGSPEEERPTWEQPTATPDVF. The VWFA domain maps to 354 to 527; it reads ELLFLLDGSG…KALEPALSDI (174 aa). Disordered stretches follow at residues 590–650, 672–710, 751–789, 1008–1037, and 1126–1168; these read PEEV…SSDT, SASPEPGPGSTCSSESPGSQGPGSPSGSRPLDPPSQQGC, ALAGRSLSSPSGRANPVPGRARHPSLDAIPDGLGPEPGQ, SKSALGEPISPTGDHHGLPHQPPASSRLSL, and DSAT…SSDL. Residues 595–619 show a composition bias toward polar residues; the sequence is SATSPGTEPTHTTEPLGTGTVSAEL. Low complexity-rich tracts occupy residues 684–701, 751–764, and 780–789; these read SSESPGSQGPGSPSGSRP, ALAGRSLSSPSGRA, and PDGLGPEPGQ. A compositionally biased stretch (low complexity) spans 1127 to 1145; sequence SATASCSQSPSSGSEGPGQ. A compositionally biased stretch (basic and acidic residues) spans 1159-1168; sequence GMERQDSSDL.

The sequence is that of von Willebrand factor A domain-containing protein 5B2 (Vwa5b2) from Mus musculus (Mouse).